Reading from the N-terminus, the 367-residue chain is Glutamate 5-kinase (367 aa).

K10 contacts ATP. Substrate contacts are provided by S50, D137, and N149. ATP-binding positions include T169–D170 and T211–K217. Residues A275 to E353 enclose the PUA domain.

The protein belongs to the glutamate 5-kinase family.

Its subcellular location is the cytoplasm. The enzyme catalyses L-glutamate + ATP = L-glutamyl 5-phosphate + ADP. The protein operates within amino-acid biosynthesis; L-proline biosynthesis; L-glutamate 5-semialdehyde from L-glutamate: step 1/2. Proline-mediated feedback inhibition. Its function is as follows. Catalyzes the transfer of a phosphate group to glutamate to form L-glutamate 5-phosphate. The chain is Glutamate 5-kinase from Serratia marcescens.